A 62-amino-acid chain; its full sequence is Small ribosomal subunit protein bS21 (62 aa).

It belongs to the bacterial ribosomal protein bS21 family.

This Mycoplasma genitalium (strain ATCC 33530 / DSM 19775 / NCTC 10195 / G37) (Mycoplasmoides genitalium) protein is Small ribosomal subunit protein bS21 (rpsU).